The following is a 279-amino-acid chain: Osmoprotective compounds uptake permease protein GgtC (279 aa).

7 helical membrane passes run 7 to 27 (LLFL…LSFF), 58 to 78 (LWLV…AVLV), 90 to 110 (IIFL…KFVY), 120 to 140 (IGLL…WLVE), 146 to 166 (FALI…ILSA), 202 to 222 (LLVV…IVFV), and 247 to 267 (FGRG…VMIT). In terms of domain architecture, ABC transmembrane type-1 spans 53 to 270 (FRNNLLWLVL…IVPVMITNIR (218 aa)).

Belongs to the binding-protein-dependent transport system permease family. As to quaternary structure, the complex is composed of two ATP-binding proteins (GgtA), two transmembrane proteins (GgtC and GgtD) and a solute-binding protein (GgtB).

The protein localises to the cell membrane. Its function is as follows. Part of the ABC transporter complex GgtABCD involved in the uptake of the osmoprotective compounds glucosylglycerol (GG), sucrose and trehalose. Responsible for the translocation of the substrate across the membrane. This Synechocystis sp. (strain ATCC 27184 / PCC 6803 / Kazusa) protein is Osmoprotective compounds uptake permease protein GgtC.